Consider the following 230-residue polypeptide: ATP-dependent dethiobiotin synthetase BioD (230 aa).

12–17 lines the ATP pocket; it reads DIGKTH. Thr16 is a Mg(2+) binding site. The active site involves Lys37. Ser41 contributes to the substrate binding site. Residues Asp52, 115–118, and 175–176 each bind ATP; these read EGAG and SE. Residues Asp52 and Glu115 each contribute to the Mg(2+) site.

Belongs to the dethiobiotin synthetase family. Homodimer. Mg(2+) serves as cofactor.

The protein localises to the cytoplasm. The catalysed reaction is (7R,8S)-7,8-diammoniononanoate + CO2 + ATP = (4R,5S)-dethiobiotin + ADP + phosphate + 3 H(+). The protein operates within cofactor biosynthesis; biotin biosynthesis; biotin from 7,8-diaminononanoate: step 1/2. Its function is as follows. Catalyzes a mechanistically unusual reaction, the ATP-dependent insertion of CO2 between the N7 and N8 nitrogen atoms of 7,8-diaminopelargonic acid (DAPA, also called 7,8-diammoniononanoate) to form a ureido ring. In Caulobacter sp. (strain K31), this protein is ATP-dependent dethiobiotin synthetase BioD.